We begin with the raw amino-acid sequence, 372 residues long: Gibberellin 20 oxidase 1 (372 aa).

The Fe2OG dioxygenase domain occupies 209–309 (RNDSIMRLNY…RRSLAFFLCP (101 aa)). Residues histidine 234, aspartate 236, and histidine 290 each contribute to the Fe cation site. Arginine 300 is a catalytic residue.

This sequence belongs to the iron/ascorbate-dependent oxidoreductase family. GA20OX subfamily. Fe(2+) is required as a cofactor. It depends on L-ascorbate as a cofactor. In terms of tissue distribution, preferentially expressed in reproductive organs. Expressed in the epithelium of embryos and the tapetum of anthers. Expressed at low levels in the shoot apical meristem.

The catalysed reaction is gibberellin A12 + 2 2-oxoglutarate + 3 O2 + H(+) = gibberellin A9 + 2 succinate + 3 CO2 + 2 H2O. It carries out the reaction gibberellin A53 + 2 2-oxoglutarate + 3 O2 + H(+) = gibberellin A20 + 2 succinate + 3 CO2 + 2 H2O. Functionally, key oxidase enzyme in the biosynthesis of gibberellin. Catalyzes the conversion of GA12 and GA53 to GA9 and GA20 respectively, via a three-step oxidation at C-20 of the GA skeleton. The sequence is that of Gibberellin 20 oxidase 1 from Oryza sativa subsp. japonica (Rice).